The chain runs to 508 residues: E3 ubiquitin-protein ligase XBAT32 (508 aa).

5 ANK repeats span residues 50-79 (VRNS…DINL), 83-112 (RGQT…NIHR), 117-147 (NGGT…SVPN), 177-206 (GGIT…SVTQ), and 220-249 (AGST…CLAA). An RING-type zinc finger spans residues 321–372 (CAVCLERKCTVAADGCAHEFCTNCALYLSTTSITSSKTSNVTPGSVPCPLCR).

Interacts with ACS4 and ACS7. Expressed in the vascular system of primary root, vascular tissue of leaves, stems and anthers.

It catalyses the reaction S-ubiquitinyl-[E2 ubiquitin-conjugating enzyme]-L-cysteine + [acceptor protein]-L-lysine = [E2 ubiquitin-conjugating enzyme]-L-cysteine + N(6)-ubiquitinyl-[acceptor protein]-L-lysine.. Its pathway is protein modification; protein ubiquitination. Its function is as follows. E3 ubiquitin-protein ligase that mediates ubiquitination of ACC synthases (ACS). Negatively regulates ethylene biosynthesis probably via ubiquitin-dependent degradation of ACS4 and ACS7 enzymes. Regulates lateral root formation and development by controlling ethylene production which inhibits lateral root formation at high concentration. This Arabidopsis thaliana (Mouse-ear cress) protein is E3 ubiquitin-protein ligase XBAT32 (XBAT32).